The chain runs to 149 residues: Calmodulin (149 aa).

EF-hand domains lie at 8–43, 44–79, 81–116, and 117–149; these read EQIAEFKEAFSLFDKDGDGNITTKELGTVMRSLGQN, PTEAELQDMINEVDADGNGTIDFPEFLTMMARKMAD, DTEEEIREAFKVFDKDGNGFISAAELRHVMTNLGEK, and LSDEEVDEMIREADVDGDGQVNYDEFVKMMLSK. 14 residues coordinate Ca(2+): Asp-21, Asp-23, Asp-25, Asn-27, Glu-32, Asp-57, Asp-59, Asn-61, Thr-63, Glu-68, Asp-94, Asp-96, Asn-98, and Glu-105. Residue Lys-116 is modified to N6,N6,N6-trimethyllysine. Residues Asp-130, Asp-132, Asp-134, Gln-136, and Glu-141 each coordinate Ca(2+).

Belongs to the calmodulin family.

In terms of biological role, calmodulin mediates the control of a large number of enzymes, ion channels and other proteins by Ca(2+). Among the enzymes to be stimulated by the calmodulin-Ca(2+) complex are a number of protein kinases and phosphatases. This Physarum polycephalum (Slime mold) protein is Calmodulin.